The primary structure comprises 282 residues: Ribosomal RNA small subunit methyltransferase A (282 aa).

S-adenosyl-L-methionine is bound by residues asparagine 28, leucine 30, glycine 55, glutamate 77, aspartate 103, and asparagine 123.

It belongs to the class I-like SAM-binding methyltransferase superfamily. rRNA adenine N(6)-methyltransferase family. RsmA subfamily.

Its subcellular location is the cytoplasm. It catalyses the reaction adenosine(1518)/adenosine(1519) in 16S rRNA + 4 S-adenosyl-L-methionine = N(6)-dimethyladenosine(1518)/N(6)-dimethyladenosine(1519) in 16S rRNA + 4 S-adenosyl-L-homocysteine + 4 H(+). Functionally, specifically dimethylates two adjacent adenosines (A1518 and A1519) in the loop of a conserved hairpin near the 3'-end of 16S rRNA in the 30S particle. May play a critical role in biogenesis of 30S subunits. The sequence is that of Ribosomal RNA small subunit methyltransferase A from Afipia carboxidovorans (strain ATCC 49405 / DSM 1227 / KCTC 32145 / OM5) (Oligotropha carboxidovorans).